A 154-amino-acid polypeptide reads, in one-letter code: Leghemoglobin-1 (154 aa).

The 149-residue stretch at 3–151 folds into the Globin domain; it reads VLTDVQVALV…LAIIIKKEMK (149 aa). Serine 46 serves as a coordination point for heme b. Position 46 is a phosphoserine (serine 46). Histidine 64 lines the O2 pocket. Residues lysine 67, histidine 98, and lysine 101 each contribute to the heme b site. Tyrosine 139 carries the nitrated tyrosine modification.

The protein belongs to the plant globin family. In terms of assembly, monomer. Post-translationally, nitrated in effective nodules and particularly in hypoxic conditions; this mechanism may play a protective role in the symbiosis by buffering toxic peroxynitrite NO(2)(-). Nitration level decrease during nodule senescence. In terms of processing, phosphorylation at Ser-46 disrupts the molecular environment of its porphyrin ring oxygen binding pocket, thus leading to a reduced oxygen consumption and to the delivery of oxygen O(2) to symbiosomes. Accumulates in developing root nodules and present in roots, especially in the upper part. Detected in leaves at low levels.

It is found in the cytoplasm. The protein resides in the cytosol. Its subcellular location is the nucleus. Leghemoglobin that reversibly binds oxygen O(2) through a pentacoordinated heme iron. In root nodules, facilitates the diffusion of oxygen to the bacteroids while preventing the bacterial nitrogenase from being inactivated by buffering dioxygen, nitric oxide and carbon monoxide, and promoting the formation of reactive oxygen species (ROS, e.g. H(2)O(2)). This role is essential for symbiotic nitrogen fixation (SNF). The protein is Leghemoglobin-1 of Lupinus luteus (European yellow lupine).